Reading from the N-terminus, the 372-residue chain is 4-hydroxy-3-methylbut-2-en-1-yl diphosphate synthase (flavodoxin) (372 aa).

Residues C270, C273, C305, and E312 each coordinate [4Fe-4S] cluster.

Belongs to the IspG family. [4Fe-4S] cluster serves as cofactor.

The enzyme catalyses (2E)-4-hydroxy-3-methylbut-2-enyl diphosphate + oxidized [flavodoxin] + H2O + 2 H(+) = 2-C-methyl-D-erythritol 2,4-cyclic diphosphate + reduced [flavodoxin]. It participates in isoprenoid biosynthesis; isopentenyl diphosphate biosynthesis via DXP pathway; isopentenyl diphosphate from 1-deoxy-D-xylulose 5-phosphate: step 5/6. Its function is as follows. Converts 2C-methyl-D-erythritol 2,4-cyclodiphosphate (ME-2,4cPP) into 1-hydroxy-2-methyl-2-(E)-butenyl 4-diphosphate. The chain is 4-hydroxy-3-methylbut-2-en-1-yl diphosphate synthase (flavodoxin) from Salmonella paratyphi B (strain ATCC BAA-1250 / SPB7).